A 130-amino-acid chain; its full sequence is Transcription antitermination protein NusB (130 aa).

This sequence belongs to the NusB family.

Its function is as follows. Involved in transcription antitermination. Required for transcription of ribosomal RNA (rRNA) genes. Binds specifically to the boxA antiterminator sequence of the ribosomal RNA (rrn) operons. The polypeptide is Transcription antitermination protein NusB (Bacillus velezensis (strain DSM 23117 / BGSC 10A6 / LMG 26770 / FZB42) (Bacillus amyloliquefaciens subsp. plantarum)).